The chain runs to 321 residues: MIFATLEHILTHISFSIISIVITIQLIDLLVYQIVGICDSSEKGIIATFFCITGLLITRWIYSRHFPLSDLYESLMFLSWSFSIIHMVPKAGNHKNDLSAITGPSAIFTQGFATSDLLTEMHQSAILVPALQSQWLMMHVSMMLLSYAALLCGALLSVAFLVITFRKNTDIAVKSNYLLIGTFSFGEIQYLNEKRSVLQNTSFPSFRNYHRYRLTQRLDHWSYRVISLGFIFSTIGILSGAVWANEAWGSYWNWDPKETWAFITWTIFAIYLHTRTNQSLQGVNSSIVASIGFLIIWICYFGVNLLGIGLHSYGSFTLTAN.

6 helical membrane passes run 17-37 (IISIVITIQLIDLLVYQIVGI), 43-63 (KGIIATFFCITGLLITRWIYS), 143-163 (MLLSYAALLCGALLSVAFLVI), 225-245 (VISLGFIFSTIGILSGAVWAN), 258-275 (ETWAFITWTIFAIYLHTR), and 287-307 (IVASIGFLIIWICYFGVNLLG).

The protein belongs to the CcmF/CycK/Ccl1/NrfE/CcsA family. May interact with Ccs1.

It is found in the plastid. Its subcellular location is the chloroplast thylakoid membrane. Its function is as follows. Required during biogenesis of c-type cytochromes (cytochrome c6 and cytochrome f) at the step of heme attachment. The protein is Cytochrome c biogenesis protein CcsA of Drimys granadensis.